The sequence spans 220 residues: Membrane steroid-binding protein 1 (220 aa).

The helical transmembrane segment at 22-42 (VVFFTALALAFAIYQVISGWF) threads the bilayer. The Cytochrome b5 heme-binding domain occupies 74 to 171 (EITEEELKQY…SKYAKVGTVK (98 aa)). Residues 74–171 (EITEEELKQY…SKYAKVGTVK (98 aa)) form a steroid-binding region. Positions 174–220 (GSEPETASVSEPTENVEQDAHVTTTPGKTVVDKSDDAPAETVLKKEE) are disordered. The segment covering 178–200 (ETASVSEPTENVEQDAHVTTTPG) has biased composition (polar residues). The segment covering 203 to 220 (VVDKSDDAPAETVLKKEE) has biased composition (basic and acidic residues).

It belongs to the cytochrome b5 family. MAPR subfamily. In terms of assembly, interacts with BAK1 (via extracellular region). In terms of tissue distribution, expressed in cotyledons, stems, roots, leaves, flower and silique stalks, pistils and stigmas, but not in anthers.

The protein localises to the cell membrane. It is found in the endosome membrane. In terms of biological role, MSBP1 can bind to multiple steroid compounds with different affinities. Negatively regulates cell elongation and brassinosteroid signaling. May act as a coreceptor with BAK1 and enhances its endocytosis. The sequence is that of Membrane steroid-binding protein 1 (MSBP1) from Arabidopsis thaliana (Mouse-ear cress).